The following is a 787-amino-acid chain: ATP-dependent zinc metalloprotease FtsH (787 aa).

The Cytoplasmic portion of the chain corresponds to 1 to 5; the sequence is MNRKN. The helical transmembrane segment at 6 to 26 threads the bilayer; the sequence is VIRMVTAIAVVVLLGWSFFYF. The Extracellular segment spans residues 27–110; sequence SDDTRGYKFV…KVTTAVNEGS (84 aa). The chain crosses the membrane as a helical span at residues 111 to 131; it reads ILGELLVYVLPLLLLVGLFVM. At 132 to 787 the chain is on the cytoplasmic side; sequence FSRMQGGARM…VSPSNPPAHG (656 aa). 203–210 contacts ATP; it reads GPPGTGKT. Histidine 425 serves as a coordination point for Zn(2+). Glutamate 426 is a catalytic residue. Residues histidine 429 and aspartate 501 each coordinate Zn(2+). Residues 616 to 787 are disordered; the sequence is DFGGRIPSDK…VSPSNPPAHG (172 aa). Composition is skewed to low complexity over residues 650 to 671 and 700 to 709; these read AFKA…AAQS and YGAPPGWHAP. Pro residues predominate over residues 710-720; the sequence is GWPPQQPPDYW. The segment covering 721 to 732 has biased composition (low complexity); the sequence is YPPEQQPSQSPY. Over residues 733–762 the composition is skewed to pro residues; the sequence is WPQPAPSYPGQAPPPYPSYPPCPSYPPPGQ.

In the central section; belongs to the AAA ATPase family. This sequence in the C-terminal section; belongs to the peptidase M41 family. In terms of assembly, homohexamer. It depends on Zn(2+) as a cofactor.

The protein resides in the cell membrane. Its function is as follows. Acts as a processive, ATP-dependent zinc metallopeptidase for both cytoplasmic and membrane proteins. Plays a role in the quality control of integral membrane proteins. This chain is ATP-dependent zinc metalloprotease FtsH, found in Mycobacterium leprae (strain TN).